Consider the following 752-residue polypeptide: Ribonucleases P/MRP protein subunit popl-1 (752 aa).

Residues 638 to 663 are disordered; sequence KTTKRKRVNRKKRESKKRRKIEQEKR. Basic residues predominate over residues 640-657; it reads TKRKRVNRKKRESKKRRK.

As to quaternary structure, component of nuclear RNase P and RNase MRP ribonucleoproteins. Several subunits of RNase P are also part of the RNase MRP complex.

The protein localises to the nucleus. Its subcellular location is the nucleolus. It catalyses the reaction Endonucleolytic cleavage of RNA, removing 5'-extranucleotides from tRNA precursor.. Functionally, component of ribonuclease P, a ribonucleoprotein complex that generates mature tRNA molecules by cleaving their 5'-ends. Also a component of the MRP ribonuclease complex, which cleaves pre-rRNA sequences. The polypeptide is Ribonucleases P/MRP protein subunit popl-1 (Caenorhabditis elegans).